Consider the following 1318-residue polypeptide: Putative tetratricopeptide repeat protein 41 (1318 aa).

TPR repeat units follow at residues 399-432, 653-684, 817-850, 858-891, 991-1027, and 1045-1082; these read TQLETDILNEDSDGLVFSFLVEVFIASISLKPCI, WVQEKPNGLLYFWHQSLSAVEHKLLGVITPVE, CRLMFFIGSFLKFMGKTNEAEELFLSVEDMLVQS, LKVQNAIGELYLETGMTQEGFQYFQKAWSSMLRL, MEFLADLLFFPQRDSKKSQRKQVLKYYKQVIKIKENA, and SDTLCKLAGHLLASDSCHHVMIEAVGYLYRSVDLRVIH.

It is found in the cytoplasm. In Homo sapiens (Human), this protein is Putative tetratricopeptide repeat protein 41.